The chain runs to 340 residues: Lipopolysaccharide heptosyltransferase 3 (340 aa).

The protein belongs to the glycosyltransferase 9 family.

It carries out the reaction an L-alpha-D-Hep-(1-&gt;3)-4-O-phospho-L-alpha-D-Hep-(1-&gt;5)-[alpha-Kdo-(2-&gt;4)]-alpha-Kdo-(2-&gt;6)-lipid A + ADP-L-glycero-beta-D-manno-heptose = an L-alpha-D-Hep-(1-&gt;7)-L-alpha-D-Hep-(1-&gt;3)-4-O-phospho-L-alpha-D-Hep-(1-&gt;5)-[alpha-Kdo-(2-&gt;4)]-alpha-Kdo-(2-&gt;6)-lipid A + ADP + H(+). The enzyme catalyses L-alpha-D-Hep-(1-&gt;3)-4-O-phospho-L-alpha-D-Hep-(1-&gt;5)-[alpha-Kdo-(2-&gt;4)]-alpha-Kdo-(2-&gt;6)-lipid A (E. coli) + ADP-L-glycero-beta-D-manno-heptose = L-alpha-D-Hep-(1-&gt;7)-L-alpha-D-Hep-(1-&gt;3)-4-O-phospho-L-alpha-D-Hep-(1-&gt;5)-[alpha-Kdo-(2-&gt;4)]-alpha-Kdo-(2-&gt;6)-lipid A (E. coli) + ADP + H(+). It functions in the pathway bacterial outer membrane biogenesis; LPS core biosynthesis. Functionally, glycosyltransferase involved in the biosynthesis of the core oligosaccharide region of lipopolysaccharide (LPS). Catalyzes the addition of the third heptose unit (HepIII) to the second heptose unit (HepII) of the phospho-Hep2-Kdo2-lipid A module. The transfer of HepIII seems to be a prerequisite to the phosphorylation of the second heptose unit. The chain is Lipopolysaccharide heptosyltransferase 3 from Escherichia coli.